We begin with the raw amino-acid sequence, 150 residues long: Arginine repressor (150 aa).

Belongs to the ArgR family.

It is found in the cytoplasm. It functions in the pathway amino-acid biosynthesis; L-arginine biosynthesis [regulation]. Functionally, regulates arginine biosynthesis genes. The protein is Arginine repressor of Ruminiclostridium cellulolyticum (strain ATCC 35319 / DSM 5812 / JCM 6584 / H10) (Clostridium cellulolyticum).